The primary structure comprises 127 residues: Photosystem II reaction center Psb28 protein (127 aa).

A disordered region spans residues 107 to 127; it reads GLGYSQNQNSDQTDGDANAEA. Residues 109–118 are compositionally biased toward polar residues; it reads GYSQNQNSDQ.

Belongs to the Psb28 family. As to quaternary structure, part of the photosystem II complex.

The protein localises to the cellular thylakoid membrane. This Parasynechococcus marenigrum (strain WH8102) protein is Photosystem II reaction center Psb28 protein.